The sequence spans 99 residues: Putative septation protein SpoVG (99 aa).

Belongs to the SpoVG family.

Could be involved in septation. This Aster yellows witches'-broom phytoplasma (strain AYWB) protein is Putative septation protein SpoVG.